A 206-amino-acid polypeptide reads, in one-letter code: Large ribosomal subunit protein mL62 (206 aa).

Residues 1–29 constitute a mitochondrion transit peptide; it reads MAAARCLRWGLSRAEAWLLPPPTSCCHRA. N5-methylglutamine is present on glutamine 90.

It belongs to the prokaryotic/mitochondrial release factor family. Mitochondrion-specific ribosomal protein mL62 subfamily. As to quaternary structure, component of the mitochondrial ribosome large subunit (39S) which comprises a 16S rRNA and about 50 distinct proteins. Post-translationally, methylation of glutamine in the GGQ triplet by HEMK1.

It localises to the mitochondrion. The enzyme catalyses an N-acyl-L-alpha-aminoacyl-tRNA + H2O = an N-acyl-L-amino acid + a tRNA + H(+). Its function is as follows. Essential peptidyl-tRNA hydrolase component of the mitochondrial large ribosomal subunit. Acts as a codon-independent translation release factor that has lost all stop codon specificity and directs the termination of translation in mitochondrion, possibly in case of abortive elongation. May be involved in the hydrolysis of peptidyl-tRNAs that have been prematurely terminated and thus in the recycling of stalled mitochondrial ribosomes. The protein is Large ribosomal subunit protein mL62 of Bos taurus (Bovine).